An 82-amino-acid polypeptide reads, in one-letter code: Small ribosomal subunit protein eS21y (82 aa).

The residue at position 1 (Met-1) is an N-acetylmethionine.

This sequence belongs to the eukaryotic ribosomal protein eS21 family.

The sequence is that of Small ribosomal subunit protein eS21y (RPS21C) from Arabidopsis thaliana (Mouse-ear cress).